Reading from the N-terminus, the 326-residue chain is Histone-lysine N-methyltransferase Suv4-20 (326 aa).

The region spanning 163–273 is the SET domain; sequence QECTRYSLEG…AGDEITCFYG (111 aa). Residues 294–313 form a disordered region; it reads RGKFSTSDEEENDEPSALSE.

It belongs to the class V-like SAM-binding methyltransferase superfamily. Histone-lysine methyltransferase family. Suvar4-20 subfamily.

It localises to the nucleus. It is found in the chromosome. The enzyme catalyses N(6)-methyl-L-lysyl(20)-[histone H4] + S-adenosyl-L-methionine = N(6),N(6)-dimethyl-L-lysyl(20)-[histone H4] + S-adenosyl-L-homocysteine + H(+). It carries out the reaction N(6),N(6)-dimethyl-L-lysyl(20)-[histone H4] + S-adenosyl-L-methionine = N(6),N(6),N(6)-trimethyl-L-lysyl(20)-[histone H4] + S-adenosyl-L-homocysteine + H(+). Its function is as follows. Histone methyltransferase that specifically di- and trimethylates 'Lys-20' of histone H4 (H4K20me2/me3). H4 'Lys-20' trimethylation represents a specific tag for epigenetic transcriptional repression. Contributes to dosage compensation of X chromosome-relative to autosome-linked gene expression, possibly by converting H4K20me1 to H4K20m2/me3 on autosomes. Involved in the regulation of growth and body fat metabolism downstream of the TOR complex 2 pathway. The polypeptide is Histone-lysine N-methyltransferase Suv4-20 (Caenorhabditis briggsae).